The following is a 192-amino-acid chain: MKFATFLDQQIAEHAETLAVTGAAVREPFQRLVQACVDSLAAGGKILFFGNGGSAADAQHLAAELVIRYRYNRKALAALALTTDTSTLTACANDFSYEEIFSRQIEALGRPGDVAIGITTSGSSPNVLTALAVARDMGLVAAGFAGRDGGKMVGLADPLLIVPSNVTARIQEMHILIGHALCDQVEAVAAPA.

The region spanning 36–192 (CVDSLAAGGK…DQVEAVAAPA (157 aa)) is the SIS domain. Position 51-53 (51-53 (NGG)) interacts with substrate. The Zn(2+) site is built by H60 and E64. Residues E64, 93-94 (ND), 119-121 (TTS), S124, and Q171 each bind substrate. Q171 and H179 together coordinate Zn(2+).

This sequence belongs to the SIS family. GmhA subfamily. Homotetramer. Zn(2+) serves as cofactor.

It localises to the cytoplasm. The catalysed reaction is 2 D-sedoheptulose 7-phosphate = D-glycero-alpha-D-manno-heptose 7-phosphate + D-glycero-beta-D-manno-heptose 7-phosphate. The protein operates within carbohydrate biosynthesis; D-glycero-D-manno-heptose 7-phosphate biosynthesis; D-glycero-alpha-D-manno-heptose 7-phosphate and D-glycero-beta-D-manno-heptose 7-phosphate from sedoheptulose 7-phosphate: step 1/1. Catalyzes the isomerization of sedoheptulose 7-phosphate in D-glycero-D-manno-heptose 7-phosphate. The sequence is that of Phosphoheptose isomerase from Paramagnetospirillum magneticum (strain ATCC 700264 / AMB-1) (Magnetospirillum magneticum).